The primary structure comprises 361 residues: MDNVMAQLESLEVRYEEIQEMMADPEVIADTKRYMEITKEEADMREVVQKFRKFKADKEEIAGNKEIIADGSDPELVEMAKMENSELEDEISQLEDEIKILMLPKDPNDDKDIIMEIRGAAGGDEASLFAGDLLRMYEKYAENQGWNVSIVDSEQTEVGGYKRVAIMITGNKVYSKLKYENGAHRVQRIPVTESAGRVHTSTATVAVMPEYEQVDIDLDPKEIRVDVYRSSGAGGQHINKTSSAVRMTHLPTGIVVAMQDQRSQQQNRAKAMEILKSRVYDYYESQNRDKYDAKRKNAVGTGDRSERIRTYNYPQNRVTDHRIGLTLNKLDRIMNGELDEVIDALTVYYQTKQLEELAENA.

Q236 is subject to N5-methylglutamine.

This sequence belongs to the prokaryotic/mitochondrial release factor family. In terms of processing, methylated by PrmC. Methylation increases the termination efficiency of RF1.

It localises to the cytoplasm. Functionally, peptide chain release factor 1 directs the termination of translation in response to the peptide chain termination codons UAG and UAA. This Lactobacillus delbrueckii subsp. bulgaricus (strain ATCC BAA-365 / Lb-18) protein is Peptide chain release factor 1.